The primary structure comprises 483 residues: Regulatory protein ViaA (483 aa).

It belongs to the ViaA family. As to quaternary structure, homodimer. Interacts with RavA.

Its subcellular location is the cytoplasm. Component of the RavA-ViaA chaperone complex, which may act on the membrane to optimize the function of some of the respiratory chains. ViaA stimulates the ATPase activity of RavA. The protein is Regulatory protein ViaA of Cronobacter sakazakii (strain ATCC BAA-894) (Enterobacter sakazakii).